We begin with the raw amino-acid sequence, 517 residues long: ATP synthase subunit beta (517 aa).

167–174 (GGAGVGKT) is an ATP binding site. 2 stretches are compositionally biased toward basic and acidic residues: residues 475–484 (AESMGAKMDD) and 495–508 (DSKD…KADD). Residues 475–517 (AESMGAKMDDGGSDGAPPPSDSKDKGKGDSKADDKGDDADKDA) form a disordered region.

It belongs to the ATPase alpha/beta chains family. F-type ATPases have 2 components, CF(1) - the catalytic core - and CF(0) - the membrane proton channel. CF(1) has five subunits: alpha(3), beta(3), gamma(1), delta(1), epsilon(1). CF(0) has three main subunits: a(1), b(2) and c(9-12). The alpha and beta chains form an alternating ring which encloses part of the gamma chain. CF(1) is attached to CF(0) by a central stalk formed by the gamma and epsilon chains, while a peripheral stalk is formed by the delta and b chains.

The protein resides in the cell membrane. It carries out the reaction ATP + H2O + 4 H(+)(in) = ADP + phosphate + 5 H(+)(out). In terms of biological role, produces ATP from ADP in the presence of a proton gradient across the membrane. The catalytic sites are hosted primarily by the beta subunits. The polypeptide is ATP synthase subunit beta (Mycobacterium sp. (strain JLS)).